The sequence spans 322 residues: MEGDLSGFNIDAPRWDQCTFLGRVKHFFNITDPRTVFASEQELDWAKAVVEKSRMGLVPPGTQMEQLLYAKKLYDSAFHPDTGEKMNVIGRMSFQVPGGMLITGFMLQFYRTMPAVIFWQWVNQSFNALVNYTNRNAASPTSVRQMALSYFTATTTAVATAVGMNMWTKRAPPLVGRWVPFAAVAAANCVNIPMMRQQELIQGICVKDRNQNELGHSQRAAAVGIAQVVISRITMAAPGMILLPVIMERLERLHLMKKVKVMHAPLQVLLCGCFLLFMVPVACGLFPQECELSVSYLEPELRDTIKAKYGEQVLFVYFNKGL.

Methionine 1 is subject to N-acetylmethionine. A run of 5 helical transmembrane segments spans residues 99-119, 147-167, 174-194, 223-243, and 266-286; these read GMLI…VIFW, ALSY…MNMW, LVGR…NIPM, VGIA…MILL, and LQVL…CGLF.

It belongs to the sideroflexin family. Expressed in brain, heart, kidney, spleen, thymus, liver, stomach and skin.

The protein localises to the mitochondrion inner membrane. The protein resides in the mitochondrion outer membrane. The catalysed reaction is L-serine(in) = L-serine(out). Its function is as follows. Mitochondrial amino-acid transporter that mediates transport of serine into mitochondria. Involved in mitochondrial iron homeostasis by regulating heme biosynthesis. The chain is Sideroflexin-2 from Mus musculus (Mouse).